Here is an 827-residue protein sequence, read N- to C-terminus: Mitogen-activated protein kinase kinase kinase kinase 1 (827 aa).

The region spanning 17–274 is the Protein kinase domain; it reads YDLLQRLGGG…ATKMLSHQLV (258 aa). ATP is bound by residues 23-31 and lysine 46; that span reads LGGGTYGEV. Aspartate 137 functions as the Proton acceptor in the catalytic mechanism. At threonine 165 the chain carries Phosphothreonine; by autocatalysis. Position 171 is a phosphoserine; by autocatalysis (serine 171). Threonine 175 bears the Phosphothreonine; by autocatalysis mark. Residues 296–315 form a disordered region; it reads KGLPVDIEDEEPEPPPAIPR. Residue threonine 354 is modified to Phosphothreonine; by autocatalysis. The disordered stretch occupies residues 359–485; the sequence is PPAHFGSTSP…KMRGKMENEK (127 aa). Residues serine 373, serine 375, serine 403, serine 405, and serine 419 each carry the phosphoserine modification. Acidic residues predominate over residues 374–383; it reads DSDDDYDDVD. Pro residues-rich tracts occupy residues 429–443 and 461–471; these read GPPP…PPAT and APEPGQPPLVP. The segment covering 472–485 has biased composition (basic and acidic residues); that stretch reads PRKEKMRGKMENEK. A CNH domain is found at 501–806; that stretch reads PLQIHSTAAW…TFRLLCSPRP (306 aa). A Phosphoserine modification is found at serine 592.

The protein belongs to the protein kinase superfamily. STE Ser/Thr protein kinase family. STE20 subfamily. In terms of assembly, interacts with MAP3K1. Interacts with FBXW8. Interacts with CLNK (via its SH2 domain). The cofactor is Mg(2+). Autophosphorylates: phosphorylation promotes ubiquitination by the Cul7-RING(FBXW8) ubiquitin-protein ligase complex, leading to its degradation by the proteasome. Post-translationally, tyrosine-phosphorylated after activation of hemopoietic cells. In terms of processing, ubiquitinated by the Cul7-RING(FBXW8) ubiquitin-protein ligase complex following autophosphorylation, leading to its degradation by the proteasome. As to expression, expressed in hemopoietic cells (at protein level). Ubiquitously expressed in all tissues examined at embryonic stage 16.5 dpc with high levels in lung, heart and fetal liver. In the neonate, expression is restricted to the tissues which undergo lineage decisions, lung, thymus, liver, kidney and brain. In the adult, expression is limited to hemopoietic organs, thymus, bone marrow, and spleen and to the testis.

The enzyme catalyses L-seryl-[protein] + ATP = O-phospho-L-seryl-[protein] + ADP + H(+). The catalysed reaction is L-threonyl-[protein] + ATP = O-phospho-L-threonyl-[protein] + ADP + H(+). Its function is as follows. Serine/threonine-protein kinase, which plays a role in the response to environmental stress. Appears to act upstream of the JUN N-terminal pathway. Activator of the Hippo signaling pathway which plays a pivotal role in organ size control and tumor suppression by restricting proliferation and promoting apoptosis. MAP4Ks act in parallel to and are partially redundant with STK3/MST2 and STK4/MST2 in the phosphorylation and activation of LATS1/2, and establish MAP4Ks as components of the expanded Hippo pathway. May play a role in hematopoietic lineage decisions and growth regulation. Together with CLNK, it enhances CD3-triggered activation of T-cells and subsequent IL2 production. The protein is Mitogen-activated protein kinase kinase kinase kinase 1 (Map4k1) of Mus musculus (Mouse).